The sequence spans 691 residues: DNA ligase (691 aa).

NAD(+) is bound by residues 41–45 (DAEFD), 91–92 (SL), and E121. K123 (N6-AMP-lysine intermediate) is an active-site residue. R144, E184, K300, and K324 together coordinate NAD(+). 4 residues coordinate Zn(2+): C418, C421, C437, and C443. The BRCT domain occupies 607–691 (SVPRTLAGLT…LLADGPASRT (85 aa)).

Belongs to the NAD-dependent DNA ligase family. LigA subfamily. Mg(2+) serves as cofactor. The cofactor is Mn(2+).

The catalysed reaction is NAD(+) + (deoxyribonucleotide)n-3'-hydroxyl + 5'-phospho-(deoxyribonucleotide)m = (deoxyribonucleotide)n+m + AMP + beta-nicotinamide D-nucleotide.. In terms of biological role, DNA ligase that catalyzes the formation of phosphodiester linkages between 5'-phosphoryl and 3'-hydroxyl groups in double-stranded DNA using NAD as a coenzyme and as the energy source for the reaction. It is essential for DNA replication and repair of damaged DNA. The chain is DNA ligase from Mycobacterium tuberculosis (strain ATCC 25177 / H37Ra).